The sequence spans 538 residues: Bifunctional purine biosynthesis protein PurH (538 aa).

One can recognise an MGS-like domain in the interval 8–158 (IPAPDKVEIK…KNHAYVTILT (151 aa)).

It belongs to the PurH family.

The enzyme catalyses (6R)-10-formyltetrahydrofolate + 5-amino-1-(5-phospho-beta-D-ribosyl)imidazole-4-carboxamide = 5-formamido-1-(5-phospho-D-ribosyl)imidazole-4-carboxamide + (6S)-5,6,7,8-tetrahydrofolate. The catalysed reaction is IMP + H2O = 5-formamido-1-(5-phospho-D-ribosyl)imidazole-4-carboxamide. The protein operates within purine metabolism; IMP biosynthesis via de novo pathway; 5-formamido-1-(5-phospho-D-ribosyl)imidazole-4-carboxamide from 5-amino-1-(5-phospho-D-ribosyl)imidazole-4-carboxamide (10-formyl THF route): step 1/1. It functions in the pathway purine metabolism; IMP biosynthesis via de novo pathway; IMP from 5-formamido-1-(5-phospho-D-ribosyl)imidazole-4-carboxamide: step 1/1. The polypeptide is Bifunctional purine biosynthesis protein PurH (Rhizobium leguminosarum bv. trifolii (strain WSM2304)).